The primary structure comprises 144 residues: Large ribosomal subunit protein uL11 (144 aa).

The protein belongs to the universal ribosomal protein uL11 family. Part of the ribosomal stalk of the 50S ribosomal subunit. Interacts with L10 and the large rRNA to form the base of the stalk. L10 forms an elongated spine to which L12 dimers bind in a sequential fashion forming a multimeric L10(L12)X complex. In terms of processing, one or more lysine residues are methylated.

Functionally, forms part of the ribosomal stalk which helps the ribosome interact with GTP-bound translation factors. In Streptomyces coelicolor (strain ATCC BAA-471 / A3(2) / M145), this protein is Large ribosomal subunit protein uL11.